Consider the following 1056-residue polypeptide: Carbamoyl phosphate synthase large chain (1056 aa).

A carboxyphosphate synthetic domain region spans residues 1 to 399; the sequence is MKIDVSKVIV…AFQKAIRMLD (399 aa). Positions 127, 167, 173, 174, 206, 208, 213, 239, 240, 241, 282, and 296 each coordinate ATP. Positions 131-325 constitute an ATP-grasp 1 domain; sequence QKTMKKVGLP…LAYIATKLAI (195 aa). Mg(2+) is bound by residues glutamine 282, glutamate 296, and asparagine 298. Residues glutamine 282, glutamate 296, and asparagine 298 each coordinate Mn(2+). Residues 400-536 form an oligomerization domain region; that stretch reads IGDELIGKYY…VTYDGVENDI (137 aa). Positions 537-919 are carbamoyl phosphate synthetic domain; that stretch reads PKPKKPSILV…LKSWLSVKPN (383 aa). The region spanning 661-849 is the ATP-grasp 2 domain; that stretch reads SKLLEKLGIP…LMELSAQAVL (189 aa). ATP is bound by residues arginine 697, lysine 736, isoleucine 738, glutamate 742, glycine 766, valine 767, histidine 768, serine 769, glutamine 809, and glutamate 820. Mg(2+)-binding residues include glutamine 809, glutamate 820, and asparagine 822. The Mn(2+) site is built by glutamine 809, glutamate 820, and asparagine 822. Residues 915–1043 enclose the MGS-like domain; sequence SVKPNELPKT…REYWIRKIEE (129 aa). Positions 920 to 1056 are allosteric domain; sequence ELPKTSALIY…EYAASVVLRR (137 aa).

It belongs to the CarB family. Composed of two chains; the small (or glutamine) chain promotes the hydrolysis of glutamine to ammonia, which is used by the large (or ammonia) chain to synthesize carbamoyl phosphate. Tetramer of heterodimers (alpha,beta)4. The cofactor is Mg(2+). Mn(2+) serves as cofactor.

It carries out the reaction hydrogencarbonate + L-glutamine + 2 ATP + H2O = carbamoyl phosphate + L-glutamate + 2 ADP + phosphate + 2 H(+). The enzyme catalyses hydrogencarbonate + NH4(+) + 2 ATP = carbamoyl phosphate + 2 ADP + phosphate + 2 H(+). It functions in the pathway amino-acid biosynthesis; L-arginine biosynthesis; carbamoyl phosphate from bicarbonate: step 1/1. The protein operates within pyrimidine metabolism; UMP biosynthesis via de novo pathway; (S)-dihydroorotate from bicarbonate: step 1/3. Large subunit of the glutamine-dependent carbamoyl phosphate synthetase (CPSase). CPSase catalyzes the formation of carbamoyl phosphate from the ammonia moiety of glutamine, carbonate, and phosphate donated by ATP, constituting the first step of 2 biosynthetic pathways, one leading to arginine and/or urea and the other to pyrimidine nucleotides. The large subunit (synthetase) binds the substrates ammonia (free or transferred from glutamine from the small subunit), hydrogencarbonate and ATP and carries out an ATP-coupled ligase reaction, activating hydrogencarbonate by forming carboxy phosphate which reacts with ammonia to form carbamoyl phosphate. This Pyrococcus furiosus (strain ATCC 43587 / DSM 3638 / JCM 8422 / Vc1) protein is Carbamoyl phosphate synthase large chain.